A 1220-amino-acid chain; its full sequence is von Willebrand factor A domain-containing protein 5B1 (1220 aa).

The N-terminal stretch at 1–18 (MPGLLNWITGAALPLTAS) is a signal peptide. Residues 19–149 (DVTSCVSGYA…NVTIFISTSS (131 aa)) form the VIT domain. Asparagine 140 is a glycosylation site (N-linked (GlcNAc...) asparagine). The VWFA domain maps to 361-529 (EFIFLIDRSS…RLQPKMVKSL (169 aa)). The N-linked (GlcNAc...) asparagine glycan is linked to asparagine 650. The interval 715-807 (NSGQDLNQGP…SPSRPATPAP (93 aa)) is disordered. Positions 757 to 774 (VRERTSDSRSPGDLEPSH) are enriched in basic and acidic residues. The segment covering 796-807 (RASPSRPATPAP) has biased composition (low complexity). Residue tyrosine 881 is modified to Phosphotyrosine. 2 disordered regions span residues 937–962 (RGTS…GKFQ) and 976–995 (EARS…QRSL). Asparagine 1017 carries an N-linked (GlcNAc...) asparagine glycan. A compositionally biased stretch (polar residues) spans 1093–1111 (TTRPSESKTPSPQLCTSSP). The interval 1093 to 1115 (TTRPSESKTPSPQLCTSSPPRHP) is disordered.

The protein resides in the secreted. The protein is von Willebrand factor A domain-containing protein 5B1 (VWA5B1) of Homo sapiens (Human).